We begin with the raw amino-acid sequence, 451 residues long: Phosphoglucosamine mutase (451 aa).

The Phosphoserine intermediate role is filled by serine 102. Residues serine 102, aspartate 243, aspartate 245, and aspartate 247 each coordinate Mg(2+). Phosphoserine is present on serine 102.

This sequence belongs to the phosphohexose mutase family. It depends on Mg(2+) as a cofactor. Activated by phosphorylation.

The enzyme catalyses alpha-D-glucosamine 1-phosphate = D-glucosamine 6-phosphate. Its function is as follows. Catalyzes the conversion of glucosamine-6-phosphate to glucosamine-1-phosphate. This Salinispora arenicola (strain CNS-205) protein is Phosphoglucosamine mutase.